We begin with the raw amino-acid sequence, 562 residues long: NAD-dependent malic enzyme (562 aa).

Tyrosine 101 functions as the Proton donor in the catalytic mechanism. Arginine 154 is a binding site for NAD(+). Lysine 172 (proton acceptor) is an active-site residue. The a divalent metal cation site is built by glutamate 243, aspartate 244, and aspartate 267. 2 residues coordinate NAD(+): aspartate 267 and asparagine 415.

This sequence belongs to the malic enzymes family. As to quaternary structure, homotetramer. Mg(2+) serves as cofactor. Mn(2+) is required as a cofactor.

The catalysed reaction is (S)-malate + NAD(+) = pyruvate + CO2 + NADH. It catalyses the reaction oxaloacetate + H(+) = pyruvate + CO2. The protein is NAD-dependent malic enzyme of Shewanella pealeana (strain ATCC 700345 / ANG-SQ1).